Consider the following 572-residue polypeptide: Urease subunit alpha (572 aa).

One can recognise a Urease domain in the interval 134 to 572; the sequence is GGIDSHIHFI…LPLAQRYFLF (439 aa). The Ni(2+) site is built by His-139, His-141, and Lys-222. An N6-carboxylysine modification is found at Lys-222. A substrate-binding site is contributed by His-224. Residues His-251 and His-277 each contribute to the Ni(2+) site. Residue His-325 is the Proton donor of the active site. Asp-365 is a binding site for Ni(2+).

It belongs to the metallo-dependent hydrolases superfamily. Urease alpha subunit family. In terms of assembly, heterotrimer of UreA (gamma), UreB (beta) and UreC (alpha) subunits. Three heterotrimers associate to form the active enzyme. Ni cation is required as a cofactor. Post-translationally, carboxylation allows a single lysine to coordinate two nickel ions.

The protein resides in the cytoplasm. The enzyme catalyses urea + 2 H2O + H(+) = hydrogencarbonate + 2 NH4(+). It functions in the pathway nitrogen metabolism; urea degradation; CO(2) and NH(3) from urea (urease route): step 1/1. The polypeptide is Urease subunit alpha (Paracidovorax citrulli (strain AAC00-1) (Acidovorax citrulli)).